Here is a 419-residue protein sequence, read N- to C-terminus: UDP-N-acetylglucosamine 1-carboxyvinyltransferase (419 aa).

Residue 22 to 23 coordinates phosphoenolpyruvate; the sequence is KN. Residue Arg-91 participates in UDP-N-acetyl-alpha-D-glucosamine binding. The active-site Proton donor is Cys-115. Cys-115 carries the 2-(S-cysteinyl)pyruvic acid O-phosphothioketal modification. Residues 120 to 124, 160 to 163, Asp-305, and Val-327 each bind UDP-N-acetyl-alpha-D-glucosamine; these read RPVDL and KVSV.

The protein belongs to the EPSP synthase family. MurA subfamily.

It is found in the cytoplasm. It catalyses the reaction phosphoenolpyruvate + UDP-N-acetyl-alpha-D-glucosamine = UDP-N-acetyl-3-O-(1-carboxyvinyl)-alpha-D-glucosamine + phosphate. Its pathway is cell wall biogenesis; peptidoglycan biosynthesis. Functionally, cell wall formation. Adds enolpyruvyl to UDP-N-acetylglucosamine. The protein is UDP-N-acetylglucosamine 1-carboxyvinyltransferase of Shigella dysenteriae serotype 1 (strain Sd197).